The chain runs to 206 residues: Small ribosomal subunit protein uS4 (206 aa).

One can recognise an S4 RNA-binding domain in the interval 96–156 (TRLDNVVYRM…EKSRTQARIK (61 aa)).

Belongs to the universal ribosomal protein uS4 family. In terms of assembly, part of the 30S ribosomal subunit. Contacts protein S5. The interaction surface between S4 and S5 is involved in control of translational fidelity.

Functionally, one of the primary rRNA binding proteins, it binds directly to 16S rRNA where it nucleates assembly of the body of the 30S subunit. In terms of biological role, with S5 and S12 plays an important role in translational accuracy. The protein is Small ribosomal subunit protein uS4 of Shewanella denitrificans (strain OS217 / ATCC BAA-1090 / DSM 15013).